The following is a 295-amino-acid chain: Glycine N-phenylacetyltransferase (295 aa).

The residue at position 43 (K43) is an N6-acetyllysine. At K48 the chain carries N6-acetyllysine; alternate. K48 is subject to N6-succinyllysine; alternate. K80 is subject to N6-acetyllysine. K182 is subject to N6-acetyllysine; alternate. The residue at position 182 (K182) is an N6-succinyllysine; alternate.

It belongs to the glycine N-acyltransferase family.

The protein localises to the mitochondrion. The enzyme catalyses phenylacetyl-CoA + glycine = phenylacetylglycine + CoA + H(+). Mitochondrial acyltransferase which transfers the acyl group to the N-terminus of glycine. Can conjugate a multitude of substrates to form a variety of N-acylglycines. Catalyzes the conjugation of arylacetic acids with glycine but does not have activity towards any alkyl-CoA. In Bos taurus (Bovine), this protein is Glycine N-phenylacetyltransferase.